The sequence spans 465 residues: UDP-N-acetylmuramate--L-alanine ligase (465 aa).

ATP is bound at residue 112–118; sequence GTHGKTT.

Belongs to the MurCDEF family.

The protein localises to the cytoplasm. The catalysed reaction is UDP-N-acetyl-alpha-D-muramate + L-alanine + ATP = UDP-N-acetyl-alpha-D-muramoyl-L-alanine + ADP + phosphate + H(+). Its pathway is cell wall biogenesis; peptidoglycan biosynthesis. In terms of biological role, cell wall formation. This is UDP-N-acetylmuramate--L-alanine ligase from Burkholderia cenocepacia (strain ATCC BAA-245 / DSM 16553 / LMG 16656 / NCTC 13227 / J2315 / CF5610) (Burkholderia cepacia (strain J2315)).